A 218-amino-acid chain; its full sequence is ATP synthase subunit a (218 aa).

Transmembrane regions (helical) follow at residues 17–37 (IYST…GIFL), 75–95 (YLPL…SWFI), 104–124 (DLST…IFGI), 162–184 (LFGN…PFLL), and 196–216 (GTIQ…NFVH).

This sequence belongs to the ATPase A chain family. F-type ATPases have 2 components, CF(1) - the catalytic core - and CF(0) - the membrane proton channel. CF(1) has five subunits: alpha(3), beta(3), gamma(1), delta(1), epsilon(1). CF(0) has three main subunits: a(1), b(2) and c(9-12). The alpha and beta chains form an alternating ring which encloses part of the gamma chain. CF(1) is attached to CF(0) by a central stalk formed by the gamma and epsilon chains, while a peripheral stalk is formed by the delta and b chains. In this bacterium the a and b subunits are transcribed but do not seem to be translated, thus the ATP synthase consists of the alpha, beta, gamma, delta, epsilon and c subunits.

The protein resides in the cell membrane. In terms of biological role, key component of the proton channel; it plays a direct role in the translocation of protons across the membrane. This is ATP synthase subunit a from Moorella thermoacetica (strain ATCC 39073 / JCM 9320).